A 75-amino-acid chain; its full sequence is Putative membrane protein insertion efficiency factor (75 aa).

It belongs to the UPF0161 family.

The protein resides in the cell inner membrane. Its function is as follows. Could be involved in insertion of integral membrane proteins into the membrane. This Leptospira biflexa serovar Patoc (strain Patoc 1 / ATCC 23582 / Paris) protein is Putative membrane protein insertion efficiency factor.